A 208-amino-acid chain; its full sequence is Component of Sp100-rs (208 aa).

The region spanning 6 to 121 is the HSR domain; the sequence is GSPRMSTEQE…LRRSFECGAK (116 aa).

The polypeptide is Component of Sp100-rs (Csprs) (Mus musculus (Mouse)).